The primary structure comprises 590 residues: UvrABC system protein C (590 aa).

The GIY-YIG domain occupies 15–98 (AEPGVYQFVA…VKRHQPRYNV (84 aa)). In terms of domain architecture, UVR spans 207 to 242 (GALADPLRREMAAAAQAEAFERAANLRDRLAVVEGF).

It belongs to the UvrC family. Interacts with UvrB in an incision complex.

The protein resides in the cytoplasm. In terms of biological role, the UvrABC repair system catalyzes the recognition and processing of DNA lesions. UvrC both incises the 5' and 3' sides of the lesion. The N-terminal half is responsible for the 3' incision and the C-terminal half is responsible for the 5' incision. This Halobacterium salinarum (strain ATCC 29341 / DSM 671 / R1) protein is UvrABC system protein C.